The chain runs to 167 residues: Pathogenesis-related protein PR-1 type (167 aa).

The N-terminal stretch at 1–29 is a signal peptide; that stretch reads MAHNHWCNLFSVALVCVVALVMVQYSVAQ. Residues 36–155 form the SCP domain; it reads VDAHNAARSA…NGAWFITCNY (120 aa). Cystine bridges form between cysteine 72–cysteine 144, cysteine 117–cysteine 123, and cysteine 139–cysteine 153.

This sequence belongs to the CRISP family.

In terms of biological role, probably involved in the defense reaction of plants against pathogens. The sequence is that of Pathogenesis-related protein PR-1 type from Sambucus nigra (European elder).